A 965-amino-acid polypeptide reads, in one-letter code: Isoleucine--tRNA ligase (965 aa).

The 'HIGH' region signature appears at 68–78 (PYANGSLHMGH). Glu-582 contacts L-isoleucyl-5'-AMP. The 'KMSKS' region signature appears at 623–627 (KMSKS). ATP is bound at residue Lys-626. Residues Cys-936, Cys-939, Cys-956, and Cys-959 each coordinate Zn(2+).

Belongs to the class-I aminoacyl-tRNA synthetase family. IleS type 1 subfamily. In terms of assembly, monomer. The cofactor is Zn(2+).

It localises to the cytoplasm. It catalyses the reaction tRNA(Ile) + L-isoleucine + ATP = L-isoleucyl-tRNA(Ile) + AMP + diphosphate. In terms of biological role, catalyzes the attachment of isoleucine to tRNA(Ile). As IleRS can inadvertently accommodate and process structurally similar amino acids such as valine, to avoid such errors it has two additional distinct tRNA(Ile)-dependent editing activities. One activity is designated as 'pretransfer' editing and involves the hydrolysis of activated Val-AMP. The other activity is designated 'posttransfer' editing and involves deacylation of mischarged Val-tRNA(Ile). The protein is Isoleucine--tRNA ligase of Prochlorococcus marinus (strain MIT 9515).